Here is a 255-residue protein sequence, read N- to C-terminus: Large ribosomal subunit protein eL8 (255 aa).

Residues 1–16 (MPKAPKKITKPKKAEK) show a composition bias toward basic residues. The segment at 1–28 (MPKAPKKITKPKKAEKKKNPLFQAKPRS) is disordered.

Belongs to the eukaryotic ribosomal protein eL8 family.

In Tetrahymena thermophila, this protein is Large ribosomal subunit protein eL8 (RPL7A).